A 322-amino-acid polypeptide reads, in one-letter code: Solute carrier family 35 member B1 (322 aa).

8 helical membrane passes run 12–32 (LRLP…GILQ), 51–71 (FALT…KILI), 85–105 (WLYA…NSAL), 136–156 (YPMA…LFMY), 168–188 (TIGY…LTGV), 210–230 (LWST…WEFL), 243–263 (ILLF…TVVY), and 285–305 (VILF…LVFL). The Di-lysine motif signature appears at 318–322 (KKTSH).

The protein belongs to the nucleotide-sugar transporter family. SLC35B subfamily.

It is found in the endoplasmic reticulum membrane. The catalysed reaction is ADP(in) + ATP(out) = ADP(out) + ATP(in). It carries out the reaction UDP(out) + ATP(in) = UDP(in) + ATP(out). It catalyses the reaction UTP(out) + ATP(in) = UTP(in) + ATP(out). The enzyme catalyses dATP(out) + ATP(in) = dATP(in) + ATP(out). ATP:ADP antiporter that catalyzes the exchange of ATP and ADP across the endoplasmic reticulum (ER) membrane. Imports ATP from the cytosol to the ER lumen and exports ADP in the opposite direction. Regulates ER energy metabolism and protein biogenesis. Appears to be part of a calcium-dependent ER to cytosol low energy response axis, where calcium efflux from ER to the cytosol triggers ATP import into the ER lumen to maintain sufficient ATP supply. Provides ATP to ER chaperone HSPA5 that drives protein folding and trafficking in the ER. Can transport dATP, UTP or UDP in exchange for ATP, but the physiological relevance of this process remains to be established. This chain is Solute carrier family 35 member B1 (SLC35B1), found in Bos taurus (Bovine).